The sequence spans 216 residues: Somatotropin (216 aa).

The signal sequence occupies residues 1-26 (MAAGPRTSVLLAFGLLCLPWPQDVGA). His45 provides a ligand contact to Zn(2+). A disulfide bond links Cys78 and Cys189. Phosphoserine is present on Ser131. Position 198 (Glu198) interacts with Zn(2+). Cys206 and Cys214 are disulfide-bonded.

It belongs to the somatotropin/prolactin family.

It is found in the secreted. Functionally, plays an important role in growth control. Its major role in stimulating body growth is to stimulate the liver and other tissues to secrete IGF1. It stimulates both the differentiation and proliferation of myoblasts. It also stimulates amino acid uptake and protein synthesis in muscle and other tissues. The chain is Somatotropin (GH1) from Equus caballus (Horse).